Here is a 138-residue protein sequence, read N- to C-terminus: Small ribosomal subunit protein uS9 (138 aa).

This sequence belongs to the universal ribosomal protein uS9 family.

This is Small ribosomal subunit protein uS9 (rps9) from Sulfolobus acidocaldarius (strain ATCC 33909 / DSM 639 / JCM 8929 / NBRC 15157 / NCIMB 11770).